A 100-amino-acid polypeptide reads, in one-letter code: Urease subunit gamma (100 aa).

This sequence belongs to the urease gamma subunit family. As to quaternary structure, heterotrimer of UreA (gamma), UreB (beta) and UreC (alpha) subunits. Three heterotrimers associate to form the active enzyme.

It is found in the cytoplasm. It catalyses the reaction urea + 2 H2O + H(+) = hydrogencarbonate + 2 NH4(+). It participates in nitrogen metabolism; urea degradation; CO(2) and NH(3) from urea (urease route): step 1/1. The chain is Urease subunit gamma from Yersinia bercovieri.